The primary structure comprises 210 residues: A-kinase-interacting protein 1 (210 aa).

2 disordered regions span residues 58–80 and 136–162; these read HLEK…ERPP and QRKD…EASQ.

Interacts with PRKACA and RELA. As to expression, expressed at high levels in adult heart and at lower levels in brain, testis, ovary and skeletal muscle. Up-regulated in some breast cancer cell lines. Isoform 1 and isoform 3 are expressed in fetal brain.

It localises to the nucleus. Enhances NF-kappa-B transcriptional activity by regulating the nuclear localization of the NF-kappa-B subunit RELA and promoting the phosphorylation of RELA by PRKACA. Regulates the effect of the cAMP-dependent protein kinase signaling pathway on the NF-kappa-B activation cascade. This is A-kinase-interacting protein 1 (AKIP1) from Homo sapiens (Human).